The primary structure comprises 35 residues: MAVYSYYPIDMVLLAHLIGIIYLIIILGTLVMLFS.

A helical membrane pass occupies residues 14 to 34; the sequence is LAHLIGIIYLIIILGTLVMLF.

It localises to the endoplasmic reticulum membrane. This is an uncharacterized protein from Saccharomyces cerevisiae (strain ATCC 204508 / S288c) (Baker's yeast).